The following is a 215-amino-acid chain: MGERQTIADSKRAFHQAFPHVIAPLYRRLADELLVELHLLSHQSSFKTTPLFAVGLCTVFDTFSAGYRPEEHITGLLDALCSSNGYDANTFRKESKRCIDAAKTESVDAMDSHLAGQKLGEGSHYSRLMAIGVLRLFEEAKGDADQPDEADLRKRCKELSTALNFPAERVEKDLSLFASNSERMSAAIELVQETIAAERRKKERRQAEQAQRSES.

Residues 188–209 are a coiled coil; that stretch reads IELVQETIAAERRKKERRQAEQ.

It belongs to the THF1 family.

Functionally, may be involved in photosynthetic membrane biogenesis. This is Protein Thf1 from Synechococcus sp. (strain CC9902).